Reading from the N-terminus, the 598-residue chain is Serine/threonine-protein kinase cot-1 (598 aa).

Composition is skewed to polar residues over residues methionine 1–threonine 16, threonine 24–proline 33, and proline 99–glutamate 126. Disordered regions lie at residues methionine 1–glutamine 46, glycine 80–lysine 148, and arginine 163–isoleucine 190. Residues tyrosine 214–phenylalanine 518 enclose the Protein kinase domain. ATP-binding positions include isoleucine 220–valine 228 and lysine 243. Catalysis depends on aspartate 337, which acts as the Proton acceptor. One can recognise an AGC-kinase C-terminal domain in the interval arginine 519 to arginine 598.

This sequence belongs to the protein kinase superfamily. STE Ser/Thr protein kinase family. COT1 subfamily.

It carries out the reaction L-seryl-[protein] + ATP = O-phospho-L-seryl-[protein] + ADP + H(+). The catalysed reaction is L-threonyl-[protein] + ATP = O-phospho-L-threonyl-[protein] + ADP + H(+). Protein kinase required for hyphal elongation. The protein is Serine/threonine-protein kinase cot-1 (cot-1) of Neurospora crassa (strain ATCC 24698 / 74-OR23-1A / CBS 708.71 / DSM 1257 / FGSC 987).